We begin with the raw amino-acid sequence, 430 residues long: Alpha-1,6-mannosyl-glycoprotein 2-beta-N-acetylglucosaminyltransferase (430 aa).

The Cytoplasmic segment spans residues 1-12 (MANLWKKQRLRD). The chain crosses the membrane as a helical; Signal-anchor for type II membrane protein span at residues 13–35 (TGLCRLGILFAVTLSIVLMLVSV). The Lumenal portion of the chain corresponds to 36–430 (PRTALNGSSI…YRYSSSSASP (395 aa)). N-linked (GlcNAc...) asparagine glycosylation is found at N41 and N61. Residues 104–108 (YVHNR) and D135 each bind substrate. An intrachain disulfide couples C177 to C188. 205-209 (SLKHH) lines the substrate pocket. D237 contributes to the Mn(2+) binding site. C259 and C262 form a disulfide bridge. A glycan (N-linked (GlcNAc...) asparagine) is linked at N295. Cysteines 310 and 414 form a disulfide. A Mn(2+)-binding site is contributed by H345.

This sequence belongs to the glycosyltransferase 16 (GT16) protein family. Requires Mn(2+) as cofactor.

The protein resides in the golgi apparatus membrane. It catalyses the reaction an N(4)-{beta-D-GlcNAc-(1-&gt;2)-alpha-D-Man-(1-&gt;3)-[alpha-D-Man-(1-&gt;6)]-beta-D-Man-(1-&gt;4)-beta-D-GlcNAc-(1-&gt;4)-beta-D-GlcNAc}-L-asparaginyl-[protein] + UDP-N-acetyl-alpha-D-glucosamine = N(4)-{beta-D-GlcNAc-(1-&gt;2)-alpha-D-Man-(1-&gt;3)-[beta-D-GlcNAc-(1-&gt;2)-alpha-D-Man-(1-&gt;6)]-beta-D-Man-(1-&gt;4)-beta-D-GlcNAc-(1-&gt;4)-beta-D-GlcNAc}-L-asparaginyl-[protein] + UDP + H(+). It functions in the pathway protein modification; protein glycosylation. In terms of biological role, catalyzes an essential step in the conversion of oligo-mannose and hybrid to complex N-glycans. The protein is Alpha-1,6-mannosyl-glycoprotein 2-beta-N-acetylglucosaminyltransferase of Arabidopsis thaliana (Mouse-ear cress).